The sequence spans 278 residues: Small ribosomal subunit protein uS2 (278 aa).

Positions 233–257 are disordered; that stretch reads IDMEAAGEAPANKGKKKSVKARLDK.

This sequence belongs to the universal ribosomal protein uS2 family.

In Bacteroides thetaiotaomicron (strain ATCC 29148 / DSM 2079 / JCM 5827 / CCUG 10774 / NCTC 10582 / VPI-5482 / E50), this protein is Small ribosomal subunit protein uS2.